A 285-amino-acid chain; its full sequence is Eukaryotic translation initiation factor 3 subunit F-2 (285 aa).

The MPN domain maps to 11–145; sequence VFIKPLVLFQ…TRLYCAVEIG (135 aa).

Belongs to the eIF-3 subunit F family. Component of the eukaryotic translation initiation factor 3 (eIF-3) complex. The eIF-3 complex interacts with pix.

The protein localises to the cytoplasm. Functionally, component of the eukaryotic translation initiation factor 3 (eIF-3) complex, which is involved in protein synthesis of a specialized repertoire of mRNAs and, together with other initiation factors, stimulates binding of mRNA and methionyl-tRNAi to the 40S ribosome. The eIF-3 complex specifically targets and initiates translation of a subset of mRNAs involved in cell proliferation. This Drosophila yakuba (Fruit fly) protein is Eukaryotic translation initiation factor 3 subunit F-2.